A 356-amino-acid polypeptide reads, in one-letter code: D-alanine--D-alanine ligase (356 aa).

Residues 134–339 (KQLFATRGLP…YSELITDLIN (206 aa)) enclose the ATP-grasp domain. 167–222 (EGKLTYPVFVKPANLGSSVGISKCTDSETLIHGIEEALQFDRKLVIEQGVNAREVE) serves as a coordination point for ATP. The Mg(2+) site is built by Asp293, Glu306, and Asn308.

This sequence belongs to the D-alanine--D-alanine ligase family. Requires Mg(2+) as cofactor. Mn(2+) serves as cofactor.

It is found in the cytoplasm. The catalysed reaction is 2 D-alanine + ATP = D-alanyl-D-alanine + ADP + phosphate + H(+). It participates in cell wall biogenesis; peptidoglycan biosynthesis. Functionally, cell wall formation. This chain is D-alanine--D-alanine ligase, found in Macrococcus caseolyticus (strain JCSC5402) (Macrococcoides caseolyticum).